We begin with the raw amino-acid sequence, 224 residues long: Phosphoribosylformylglycinamidine synthase subunit PurQ (224 aa).

Positions 2–224 constitute a Glutamine amidotransferase type-1 domain; the sequence is TVAIIRFGGS…DGQGVLEGFR (223 aa). Catalysis depends on Cys-85, which acts as the Nucleophile. Residues His-202 and Glu-204 contribute to the active site. The segment at 204–224 is disordered; the sequence is ERASLPDIGPTDGQGVLEGFR.

Part of the FGAM synthase complex composed of 1 PurL, 1 PurQ and 2 PurS subunits.

It is found in the cytoplasm. It catalyses the reaction N(2)-formyl-N(1)-(5-phospho-beta-D-ribosyl)glycinamide + L-glutamine + ATP + H2O = 2-formamido-N(1)-(5-O-phospho-beta-D-ribosyl)acetamidine + L-glutamate + ADP + phosphate + H(+). The catalysed reaction is L-glutamine + H2O = L-glutamate + NH4(+). The protein operates within purine metabolism; IMP biosynthesis via de novo pathway; 5-amino-1-(5-phospho-D-ribosyl)imidazole from N(2)-formyl-N(1)-(5-phospho-D-ribosyl)glycinamide: step 1/2. Its function is as follows. Part of the phosphoribosylformylglycinamidine synthase complex involved in the purines biosynthetic pathway. Catalyzes the ATP-dependent conversion of formylglycinamide ribonucleotide (FGAR) and glutamine to yield formylglycinamidine ribonucleotide (FGAM) and glutamate. The FGAM synthase complex is composed of three subunits. PurQ produces an ammonia molecule by converting glutamine to glutamate. PurL transfers the ammonia molecule to FGAR to form FGAM in an ATP-dependent manner. PurS interacts with PurQ and PurL and is thought to assist in the transfer of the ammonia molecule from PurQ to PurL. The protein is Phosphoribosylformylglycinamidine synthase subunit PurQ of Natronomonas pharaonis (strain ATCC 35678 / DSM 2160 / CIP 103997 / JCM 8858 / NBRC 14720 / NCIMB 2260 / Gabara) (Halobacterium pharaonis).